A 657-amino-acid polypeptide reads, in one-letter code: L-glutamate oxidase precursor (657 aa).

The first 12 residues, 1-12 (MTETPRDNSATR), serve as a signal peptide directing secretion. FAD is bound by residues Glu-86, Ala-87, Arg-95, Met-120, Arg-121, Met-350, Glu-639, Trp-647, and Ile-648.

It belongs to the flavin monoamine oxidase family. LGOX subfamily. The mature enzyme is a heterohexamer composed of 2 alpha chains, 2 beta chains and 2 gamma chains (alpha2beta2gamma2). It depends on FAD as a cofactor. The precursor form is proteolytically cleaved by an endopeptidase into alpha, beta and gamma chains, which form the stable mature enzyme.

The protein resides in the secreted. It catalyses the reaction L-glutamate + O2 + H2O = H2O2 + 2-oxoglutarate + NH4(+). Its activity is regulated as follows. Proteinase K-treated enzyme exhibits improved affinity for the substrate, increased activity and increased thermostability. Catalyzes the oxidative deamination of L-glutamate to 2-ketoglutarate along with the production of ammonia and hydrogen peroxide. Exhibits strict specificity for L-glutamate, and shows only very weak activity with L-glutamine. This Streptomyces diastatochromogenes protein is L-glutamate oxidase precursor.